Reading from the N-terminus, the 559-residue chain is Formate--tetrahydrofolate ligase (559 aa).

68–75 (TPAGEGKT) serves as a coordination point for ATP.

Belongs to the formate--tetrahydrofolate ligase family.

It carries out the reaction (6S)-5,6,7,8-tetrahydrofolate + formate + ATP = (6R)-10-formyltetrahydrofolate + ADP + phosphate. Its pathway is one-carbon metabolism; tetrahydrofolate interconversion. This Mesorhizobium japonicum (strain LMG 29417 / CECT 9101 / MAFF 303099) (Mesorhizobium loti (strain MAFF 303099)) protein is Formate--tetrahydrofolate ligase.